Here is a 207-residue protein sequence, read N- to C-terminus: ATP-dependent Clp protease proteolytic subunit 2 (207 aa).

The active-site Nucleophile is the Ser102. His127 is a catalytic residue.

It belongs to the peptidase S14 family. As to quaternary structure, fourteen ClpP subunits assemble into 2 heptameric rings which stack back to back to give a disk-like structure with a central cavity, resembling the structure of eukaryotic proteasomes.

The protein localises to the cytoplasm. The enzyme catalyses Hydrolysis of proteins to small peptides in the presence of ATP and magnesium. alpha-casein is the usual test substrate. In the absence of ATP, only oligopeptides shorter than five residues are hydrolyzed (such as succinyl-Leu-Tyr-|-NHMec, and Leu-Tyr-Leu-|-Tyr-Trp, in which cleavage of the -Tyr-|-Leu- and -Tyr-|-Trp bonds also occurs).. In terms of biological role, cleaves peptides in various proteins in a process that requires ATP hydrolysis. Has a chymotrypsin-like activity. Plays a major role in the degradation of misfolded proteins. The sequence is that of ATP-dependent Clp protease proteolytic subunit 2 from Bifidobacterium longum (strain NCC 2705).